The chain runs to 336 residues: Dihydroorotate dehydrogenase (quinone) (336 aa).

Residues 62 to 66 (AGLDK) and T86 each bind FMN. K66 lines the substrate pocket. A substrate-binding site is contributed by 111–115 (NRMGF). FMN-binding residues include N139 and N172. N172 serves as a coordination point for substrate. The Nucleophile role is filled by S175. Substrate is bound at residue N177. FMN contacts are provided by K217 and T245. 246 to 247 (NT) is a substrate binding site. Residues G268, G297, and 318–319 (YS) each bind FMN.

This sequence belongs to the dihydroorotate dehydrogenase family. Type 2 subfamily. In terms of assembly, monomer. It depends on FMN as a cofactor.

The protein resides in the cell membrane. It carries out the reaction (S)-dihydroorotate + a quinone = orotate + a quinol. It functions in the pathway pyrimidine metabolism; UMP biosynthesis via de novo pathway; orotate from (S)-dihydroorotate (quinone route): step 1/1. Its function is as follows. Catalyzes the conversion of dihydroorotate to orotate with quinone as electron acceptor. The sequence is that of Dihydroorotate dehydrogenase (quinone) from Citrobacter koseri (strain ATCC BAA-895 / CDC 4225-83 / SGSC4696).